Consider the following 1992-residue polypeptide: MSNRPNNNPGGSLRRSQRNTAGAQPQDDSIGGRSCSSSSVVIVPQPEDPDRANTSEKQKTGQVPKKDNSRGVKRSASPDYNRTNSPSSAKKPKALQHTESPSETSKPHSKSKKRHLDQEPQLKSAPSPSTSKAHTRKSGAAAGSRSQKRKRTESSCIKSASVSEATGAEERSAKPTKLASKSAASAKAGCSTITDSSSAASTSSSSSAVASASSAVPPGARVKQGKDQNKARRSRSASSPSPRRSSREKEQSKTGGSSKFDWAARFSPKVSLPKTKLSLPGSSKSETSKPGPSGLQAKLASLRKSTKKRSESPPAELPSLRRSTRQKTTGSCASASRRGSGLGKRGAAEARRQEKMADPEGNQETVNSSAARTDETPQGAAGAVGMTTSGESESDDSEMGRLQALLEARGLPPHLFGPLGPRMSQLFHRTIGSGASSKAQQLLQGLQASDESQQLQAVIEMCQLLVMGNEETLGGFPVKSVVPALITLLQMEHNFDIMNHACRALTYMMEALPRSSAVVVDAIPVFLEKLQVIQCIDVAEQALTALEMLSRRHSKAILQAGGLADCLLYLEFFSINAQRNALAIAANCCQSITPDEFHFVADSLPLLTQRLTHQDKKSVESTCLCFARLVDNFQHEENLLQQVASKDLLTNVQQLLVVTPPILSSGMFIMVVRMFSLMCSNCPTLAVQLMKQNIAETLHFLLCGASNGSCQEQIDLVPRSPQELYELTSLICELMPCLPKEGIFAVDTMLKKGNAQNTDGAIWQWRDDRGLWHPYNRIDSRIIEQINEDTGTARAIQRKPNPLANTNTSGYSELKKDDARAQLMKEDPELAKSFIKTLFGVLYEVYSSSAGPAVRHKCLRAILRIIYFADAELLKDVLKNHAVSSHIASMLSSQDLKIVVGALQMAEILMQKLPDIFSVYFRREGVMHQVKHLAESESLLTSPPKACTNGSGSLGSTPSVNSGTATAATNASADLGSPSLQHSRDDSLDLSPQGRLSDVLKRKRLPKRGSRRPKYSPPRDDDKVDNQAKSPTTTQSPKSSFLASLNPKTWGRLSAQSNSNNIEPARTAGVSGLARAASKDTISNNREKIKGWIKEQAHKFVERYFSSENMDGSNPALNVLQRLCAATEQLNLQVDGGAECLVEIRSIVSESDVSSFEIQHSGFVKQLLLYLTSKSEKDAVSREIRLKRFLHVFFSSPLPGEEPIERVEPVGNAPLLALVHKMNNCLSQMEQFPVKVHDFPSGNGTGGSFSLNRGSQALKFFNTHQLKCQLQRHPDCANVKQWKGGPVKIDPLALVQAIERYLVVRGYGRVREDDEDSDDDGSDEEIDESLAAQFLNSGNVRHRLQFYIGEHLLPYNMTVYQAVRQFSIQAEDERESTDDESNPLGRAGIWTKTHTIWYKPVREDEESNKDCVGGKRGRAQTAPTKTSPRNAKKHDELWNDGVCPSVSNPLEVYLIPTAPENITFEDPSLDVILLLRVLHAVSRYWYYLYDNAMCKEIIPTSEFINSKLTAKANRQLQDPLVIMTGNIPTWLTELGKTCPFFFPFDTRQMLFYVTAFDRDRAMQRLLDTNPEINQSDSQDSRVAPRLDRKKRTVNREELLKQAESVMQDLGSSRAMLEIQYENEVGTGLGPTLEFYALVSQELQRADLGLWRGEEVTLSNPKGSQEGTKYIQNLQGLFALPFGRTAKPAHIAKVKMKFRFLGKLMAKAIMDFRLVDLPLGLPFYKWMLRQETSLTSHDLFDIDPVVARSVYHLEDIVRQKKRLEQDKSQTKESLQYALETLTMNGCSVEDLGLDFTLPGFPNIELKKGGKDIPVTIHNLEEYLRLVIFWALNEGVSRQFDSFRDGFESVFPLSHLQYFYPEELDQLLCGSKADTWDAKTLMECCRPDHGYTHDSRAVKFLFEILSSFDNEQQRLFLQFVTGSPRLPVGGFRSLNPPLTIVRKTFESTENPDDFLPSVMTCVNYLKLPDYSSLEIMREKLLMAAREGQQSFHLS.

Residues 1-10 (MSNRPNNNPG) show a composition bias toward polar residues. Residues 1 to 398 (MSNRPNNNPG…SGESESDDSE (398 aa)) form a disordered region. Serine 2 is subject to N-acetylserine. The residue at position 12 (serine 12) is a Phosphoserine. The segment covering 18–27 (RNTAGAQPQD) has biased composition (polar residues). Positions 29–43 (SIGGRSCSSSSVVIV) are enriched in low complexity. Over residues 48–70 (DPDRANTSEKQKTGQVPKKDNSR) the composition is skewed to basic and acidic residues. Phosphoserine is present on residues serine 77, serine 85, and serine 100. A compositionally biased stretch (polar residues) spans 78 to 88 (PDYNRTNSPSS). The span at 154–164 (SSCIKSASVSE) shows a compositional bias: polar residues. Composition is skewed to low complexity over residues 175–188 (PTKLASKSAASAKA) and 196–215 (SSSAASTSSSSSAVASASSA). Lysine 181 bears the N6-acetyllysine mark. The span at 280-290 (PGSSKSETSKP) shows a compositional bias: polar residues. Phosphoserine occurs at positions 310 and 312. A compositionally biased stretch (low complexity) spans 330 to 339 (GSCASASRRG). Over residues 346–358 (GAAEARRQEKMAD) the composition is skewed to basic and acidic residues. The segment covering 362–371 (NQETVNSSAA) has biased composition (polar residues). Positions 749 to 836 (MLKKGNAQNT…DPELAKSFIK (88 aa)) constitute a WWE domain. Positions 938–1044 (SLLTSPPKAC…QSPKSSFLAS (107 aa)) are disordered. Serine 942 carries the phosphoserine modification. A compositionally biased stretch (polar residues) spans 948 to 960 (TNGSGSLGSTPSV). Residues 961-973 (NSGTATAATNASA) show a composition bias toward low complexity. Serine 991 and serine 997 each carry phosphoserine. The segment covering 1001 to 1014 (KRKRLPKRGSRRPK) has biased composition (basic residues). Phosphoserine is present on serine 1016. Over residues 1017–1026 (PPRDDDKVDN) the composition is skewed to basic and acidic residues. A compositionally biased stretch (low complexity) spans 1029 to 1040 (KSPTTTQSPKSS). A phosphoserine mark is found at serine 1030, serine 1317, serine 1322, serine 1329, and serine 1376. Phosphothreonine is present on threonine 1377. Disordered regions lie at residues 1407-1434 (SNKDCVGGKRGRAQTAPTKTSPRNAKKH) and 1568-1587 (TNPEINQSDSQDSRVAPRLD). Lysine 1425 carries the N6-acetyllysine modification. Serine 1427 is subject to Phosphoserine. The tract at residues 1496-1570 (EIIPTSEFIN…AMQRLLDTNP (75 aa)) is K-box. One can recognise an HECT domain in the interval 1885–1992 (PDHGYTHDSR…REGQQSFHLS (108 aa)). Cysteine 1959 serves as the catalytic Glycyl thioester intermediate.

It belongs to the UPL family. K-HECT subfamily. As to quaternary structure, interacts with MYC; leading to disrupt interaction with isoform p19ARF/ARF of CDKN2A. Interacts with TRADD; leading to disrupt interaction with isoform p19ARF/ARF of CDKN2A. Interacts with SMARCC1; leading to disrupt interaction with SMARCE1.

The protein localises to the nucleus. The protein resides in the nucleoplasm. It carries out the reaction S-ubiquitinyl-[E2 ubiquitin-conjugating enzyme]-L-cysteine + [acceptor protein]-L-lysine = [E2 ubiquitin-conjugating enzyme]-L-cysteine + N(6)-ubiquitinyl-[acceptor protein]-L-lysine.. It functions in the pathway protein modification; protein ubiquitination. Functionally, E3 ubiquitin-protein ligase involved in ubiquitin fusion degradation (UFD) pathway and regulation of DNA repair. Part of the ubiquitin fusion degradation (UFD) pathway, a process that mediates ubiquitination of protein at their N-terminus, regardless of the presence of lysine residues in target proteins. Acts as a key regulator of DNA damage response by acting as a suppressor of RNF168, an E3 ubiquitin-protein ligase that promotes accumulation of 'Lys-63'-linked histone H2A and H2AX at DNA damage sites, thereby acting as a guard against excessive spreading of ubiquitinated chromatin at damaged chromosomes. In normal cells, mediates ubiquitination and degradation of isoform p19ARF/ARF of CDKN2A, a lysine-less tumor suppressor required for p53/TP53 activation under oncogenic stress. In cancer cells, however, isoform p19ARF/ARF and TRIP12 are located in different cell compartments, preventing isoform p19ARF/ARF ubiquitination and degradation. Does not mediate ubiquitination of isoform p16-INK4a of CDKN2A. Also catalyzes ubiquitination of NAE1 and SMARCE1, leading to their degradation. Ubiquitination and degradation of target proteins is regulated by interaction with proteins such as MYC, TRADD or SMARCC1, which disrupt the interaction between TRIP12 and target proteins. Mediates ubiquitination of ASXL1: following binding to N(6)-methyladenosine methylated DNA, ASXL1 is ubiquitinated by TRIP12, leading to its degradation and subsequent inactivation of the PR-DUB complex. This chain is E3 ubiquitin-protein ligase TRIP12 (TRIP12), found in Bos taurus (Bovine).